A 330-amino-acid polypeptide reads, in one-letter code: Inactive hydroxysteroid dehydrogenase-like protein 1 (330 aa).

Alanine 2 is subject to N-acetylalanine. The tract at residues 2 to 82 (AAVDSFYLLY…SGATDGIGKA (81 aa)) is required for mitochondria translocation. NADP(+) is bound by residues 74–80 (GATDGIG), aspartate 125, and lysine 222.

This sequence belongs to the short-chain dehydrogenases/reductases (SDR) family. 17-beta-HSD 3 subfamily. In terms of assembly, interacts with STYXL1.

The protein resides in the mitochondrion. The polypeptide is Inactive hydroxysteroid dehydrogenase-like protein 1 (Hsdl1) (Mus musculus (Mouse)).